Reading from the N-terminus, the 262-residue chain is Phosphonates import ATP-binding protein PhnC (262 aa).

The ABC transporter domain occupies 5–253 (IRVEKLAKTF…RFDHLYRSIN (249 aa)). An ATP-binding site is contributed by 37-44 (GPSGSGKS).

This sequence belongs to the ABC transporter superfamily. Phosphonates importer (TC 3.A.1.9.1) family. In terms of assembly, the complex is composed of two ATP-binding proteins (PhnC), two transmembrane proteins (PhnE) and a solute-binding protein (PhnD).

It is found in the cell inner membrane. The catalysed reaction is phosphonate(out) + ATP + H2O = phosphonate(in) + ADP + phosphate + H(+). Its function is as follows. Part of the ABC transporter complex PhnCDE involved in phosphonates import. Responsible for energy coupling to the transport system. In Shigella sonnei (strain Ss046), this protein is Phosphonates import ATP-binding protein PhnC.